The chain runs to 212 residues: Peroxiredoxin 2 (212 aa).

The region spanning 7–162 (PLIGEKFPEM…ILRSIRALQL (156 aa)) is the Thioredoxin domain. The active-site Cysteine sulfenic acid (-SOH) intermediate is cysteine 49. A substrate-binding site is contributed by arginine 125.

It belongs to the peroxiredoxin family. Prx6 subfamily. As to quaternary structure, homodecamer. Pentamer of dimers that assemble into a ring structure.

Its subcellular location is the cytoplasm. It catalyses the reaction a hydroperoxide + [thioredoxin]-dithiol = an alcohol + [thioredoxin]-disulfide + H2O. Functionally, thiol-specific peroxidase that catalyzes the reduction of hydrogen peroxide and organic hydroperoxides to water and alcohols, respectively. Plays a role in cell protection against oxidative stress by detoxifying peroxides. The protein is Peroxiredoxin 2 of Sulfurisphaera tokodaii (strain DSM 16993 / JCM 10545 / NBRC 100140 / 7) (Sulfolobus tokodaii).